The primary structure comprises 480 residues: Speriolin (480 aa).

Positions 1–76 (MSLLTSYEGL…HQGVFLPPAS (76 aa)) are necessary for targeting to centrosomes. The stretch at 2–45 (SLLTSYEGLRHQIERLVRENEELKKLVRLIRENQELKSAIKTQA) forms a coiled coil. Disordered regions lie at residues 252–297 (INNI…SRVM) and 305–324 (VEME…DNPR).

It belongs to the speriolin family. In terms of assembly, found in a complex with CDC20, CDC27 and TUBG1. Interacts with CDC20. In terms of tissue distribution, expressed in testis. Expressed in pachyten spermatocytes, spermatids and epididymal sperm (at protein level).

It is found in the cytoplasm. It localises to the cytoskeleton. The protein localises to the microtubule organizing center. The protein resides in the centrosome. The protein is Speriolin (Spatc1) of Mus musculus (Mouse).